Reading from the N-terminus, the 311-residue chain is Delta(1)-pyrroline-2-carboxylate reductase 2 (311 aa).

Belongs to the ornithine cyclodeaminase/mu-crystallin family.

It catalyses the reaction L-proline + NAD(+) = 1-pyrroline-2-carboxylate + NADH + H(+). The enzyme catalyses L-proline + NADP(+) = 1-pyrroline-2-carboxylate + NADPH + H(+). In terms of biological role, catalyzes the reduction of Delta(1)-pyrroline-2-carboxylate (Pyr2C) to L-proline, using preferentially NADPH over NADH as the electron donor. May be involved in a degradation pathway that converts trans-3-hydroxy-L-proline (t3LHyp) to L-proline. The polypeptide is Delta(1)-pyrroline-2-carboxylate reductase 2 (Burkholderia ambifaria (strain ATCC BAA-244 / DSM 16087 / CCUG 44356 / LMG 19182 / AMMD) (Burkholderia cepacia (strain AMMD))).